The primary structure comprises 221 residues: Large ribosomal subunit protein uL3 (221 aa).

The protein belongs to the universal ribosomal protein uL3 family. Part of the 50S ribosomal subunit. Forms a cluster with proteins L14 and L19.

Functionally, one of the primary rRNA binding proteins, it binds directly near the 3'-end of the 23S rRNA, where it nucleates assembly of the 50S subunit. The sequence is that of Large ribosomal subunit protein uL3 from Chlamydia felis (strain Fe/C-56) (Chlamydophila felis).